Reading from the N-terminus, the 235-residue chain is tRNA (guanine-N(1)-)-methyltransferase (235 aa).

S-adenosyl-L-methionine-binding positions include glycine 113 and 133–138 (IGDYIL).

This sequence belongs to the RNA methyltransferase TrmD family. Homodimer.

It localises to the cytoplasm. It carries out the reaction guanosine(37) in tRNA + S-adenosyl-L-methionine = N(1)-methylguanosine(37) in tRNA + S-adenosyl-L-homocysteine + H(+). In terms of biological role, specifically methylates guanosine-37 in various tRNAs. This Wolbachia sp. subsp. Brugia malayi (strain TRS) protein is tRNA (guanine-N(1)-)-methyltransferase.